The chain runs to 3685 residues: Dystrophin (3685 aa).

An actin-binding region spans residues 1–240 (MLWWEEVEDC…YITSLFQVLP (240 aa)). Calponin-homology (CH) domains follow at residues 15–119 (DVQK…LHWQ) and 134–240 (TNSE…QVLP). The tract at residues 63–72 (PKEKGSTRVH) is ANK2- and ANK-3 binding. Spectrin repeat units lie at residues 339–447 (VNLD…NLHR), 448–556 (VLMD…LLQD), 559–667 (LKWQ…QISQ), 719–828 (EIRK…WLEY), 830–934 (NNII…ELQT), 943–1045 (RYQE…KLEE), 1048–1154 (NKLR…ALKG), 1157–1263 (EKTV…TLEE), 1266–1367 (ACWH…LLEQ), 1368–1463 (SIQS…LFQK), 1468–1568 (EQRL…QLEK), 1571–1676 (KLSR…LLLE), 1679–1778 (KHME…KASI), 1779–1874 (PLKE…KALE), 1877–1979 (HQWY…TVRE), 1992–2101 (EISY…RFDR), 2104–2208 (EKWR…RLEE), 2211–2318 (NILS…EIEA), 2319–2423 (QIKD…LRAK), 2475–2577 (FNRA…QLNE), 2580–2686 (KDST…ALEE), 2689–2802 (RLLQ…HLEA), 2808–2930 (KRLH…RKID), and 2935–3040 (RLRE…QLHE). Asn340 bears the Phosphothreonine mark. Residues Tyr344 and Leu348 each carry the phosphoserine modification. Residues Glu519, Ser616, and Ser629 each carry the phosphothreonine modification. Residues 1415–1913 (SDLTSHEISL…PEPRDERKIK (499 aa)) form an interaction with SYNM region. Residues 3055 to 3088 (TSVQGPWERAISPNKVPYYINHETQTTCWDHPKM) enclose the WW domain. Residues 3058 to 3408 (QGPWERAISP…TVLEGDNMET (351 aa)) form an interaction with SYNM region. A ZZ-type; degenerate zinc finger spans residues 3308–3364 (KHQAKCNICKECPIIGFRYRSLKHFNYDICQSCFFSGRVAKGHKMHYPMVEYCTPTT). Residues Cys3313, Cys3316, Cys3337, and Cys3340 each contribute to the Zn(2+) site. The segment at 3466 to 3518 (DDEHLLIQHYCQSLNQDSPLSQPRSPAQILISLESEERGELERILADLEEENR) is binds to SNTB1. Residues Ser3483, Ser3490, and Ser3500 each carry the phosphoserine modification. Disordered regions lie at residues 3528–3554 (KQQH…QSPR) and 3603–3685 (EAKV…EDTM). 2 stretches are compositionally biased toward polar residues: residues 3607 to 3626 (NGTT…SSQP) and 3662 to 3673 (QLNNSFPSSRGR). Phosphoserine is present on residues Ser3612, Ser3613, Ser3617, Ser3623, Ser3624, and Ser3666.

In terms of assembly, interacts with SYNM. Interacts with the syntrophins SNTA1, SNTB1, SNTB2, SNTG1 and SNTG2. Interacts with KRT19. Component of the dystrophin-associated glycoprotein complex which is composed of three subcomplexes: a cytoplasmic complex comprised of DMD (or UTRN), DTNA and a number of syntrophins, such as SNTB1, SNTB2, SNTG1 and SNTG2, the transmembrane dystroglycan complex, and the sarcoglycan-sarcospan complex. Interacts with DAG1 (betaDAG1) with DMD; the interaction is inhibited by phosphorylation on the PPXY motif of DAG1. Interacts with CMYA5. Directly interacts with ANK2 and ANK3; these interactions do not interfere with betaDAG1-binding and are necessary for proper localization in muscle cells. Identified in a dystroglycan complex that contains at least PRX, DRP2, UTRN, DMD and DAG1. Interacts with DTNB. Interacts with PGM5; the interaction is direct. Interacts with NOS1; localizes NOS1 to sarcolemma in muscle cells. Expressed in muscle fibers accumulating in the costameres of myoplasm at the sarcolemma. Expressed in brain, muscle, kidney, lung and testis. Most tissues contain transcripts of multiple isoforms. Isoform 15: Only isoform to be detected in heart and liver and is also expressed in brain, testis and hepatoma cells.

It is found in the cell membrane. The protein resides in the sarcolemma. It localises to the cytoplasm. Its subcellular location is the cytoskeleton. The protein localises to the postsynaptic cell membrane. Anchors the extracellular matrix to the cytoskeleton via F-actin. Ligand for dystroglycan. Component of the dystrophin-associated glycoprotein complex which accumulates at the neuromuscular junction (NMJ) and at a variety of synapses in the peripheral and central nervous systems and has a structural function in stabilizing the sarcolemma. Also implicated in signaling events and synaptic transmission. This Homo sapiens (Human) protein is Dystrophin.